Reading from the N-terminus, the 422-residue chain is 26S proteasome non-ATPase regulatory subunit 11 (422 aa).

A PCI domain is found at 224-392; the sequence is DWKTAYSYFY…GVLIIFDEPP (169 aa).

This sequence belongs to the proteasome subunit S9 family. Component of the 19S proteasome regulatory particle complex. The 26S proteasome consists of a 20S core particle (CP) and two 19S regulatory subunits (RP). The regulatory particle is made of a lid composed of 9 subunits including PSMD11, a base containing 6 ATPases and few additional components.

The protein localises to the nucleus. The protein resides in the cytoplasm. Its subcellular location is the cytosol. Functionally, component of the 26S proteasome, a multiprotein complex involved in the ATP-dependent degradation of ubiquitinated proteins. This complex plays a key role in the maintenance of protein homeostasis by removing misfolded or damaged proteins, which could impair cellular functions, and by removing proteins whose functions are no longer required. Therefore, the proteasome participates in numerous cellular processes, including cell cycle progression, apoptosis, or DNA damage repair. In the complex, PSMD11 is required for proteasome assembly. Plays a key role in increased proteasome activity in embryonic stem cells (ESCs): its high expression in ESCs promotes enhanced assembly of the 26S proteasome, followed by higher proteasome activity. This chain is 26S proteasome non-ATPase regulatory subunit 11 (psmd11), found in Xenopus tropicalis (Western clawed frog).